The sequence spans 355 residues: Elongation factor Ts (355 aa).

The involved in Mg(2+) ion dislocation from EF-Tu stretch occupies residues 82 to 85 (TDFV).

This sequence belongs to the EF-Ts family.

It localises to the cytoplasm. In terms of biological role, associates with the EF-Tu.GDP complex and induces the exchange of GDP to GTP. It remains bound to the aminoacyl-tRNA.EF-Tu.GTP complex up to the GTP hydrolysis stage on the ribosome. In Wolinella succinogenes (strain ATCC 29543 / DSM 1740 / CCUG 13145 / JCM 31913 / LMG 7466 / NCTC 11488 / FDC 602W) (Vibrio succinogenes), this protein is Elongation factor Ts.